A 186-amino-acid chain; its full sequence is Adrenodoxin, mitochondrial (186 aa).

A mitochondrion-targeting transit peptide spans 1-58 (MAVRLLRVASAALGDTAVRWQPLVGPRAGNRGPGGSIWLGLGGRAAAARTLSLSARAW). Ser61 carries the post-translational modification Phosphoserine. Residue Lys64 is modified to N6-acetyllysine; alternate. The residue at position 64 (Lys64) is an N6-succinyllysine; alternate. In terms of domain architecture, 2Fe-2S ferredoxin-type spans 65–169 (ITVHFINRDG…NMTVRVPEAV (105 aa)). Positions 104, 110, 113, and 150 each coordinate [2Fe-2S] cluster. An N6-succinyllysine modification is found at Lys156. Ser175 carries the phosphoserine modification.

Belongs to the adrenodoxin/putidaredoxin family. As to quaternary structure, interacts with CYP11A1. It depends on [2Fe-2S] cluster as a cofactor.

It localises to the mitochondrion matrix. In terms of biological role, essential for the synthesis of various steroid hormones. Participates in the reduction of mitochondrial cytochrome P450 for steroidogenesis. Transfers electrons from adrenodoxin reductase to CYP11A1, a cytochrome P450 that catalyzes cholesterol side-chain cleavage. Does not form a ternary complex with adrenodoxin reductase and CYP11A1 but shuttles between the two enzymes to transfer electrons. This chain is Adrenodoxin, mitochondrial (FDX1), found in Sus scrofa (Pig).